We begin with the raw amino-acid sequence, 280 residues long: Polyamine aminopropyltransferase (280 aa).

The PABS domain occupies 2 to 235 (GGWIDEEHRG…GWWSWTFAAV (234 aa)). Gln-29 lines the S-methyl-5'-thioadenosine pocket. Spermidine-binding residues include His-60 and Asp-84. Residues Glu-104 and 136–137 (DG) contribute to the S-methyl-5'-thioadenosine site. Asp-155 (proton acceptor) is an active-site residue. Pro-162 serves as a coordination point for S-methyl-5'-thioadenosine.

The protein belongs to the spermidine/spermine synthase family. As to quaternary structure, homodimer or homotetramer.

The protein resides in the cytoplasm. The enzyme catalyses S-adenosyl 3-(methylsulfanyl)propylamine + putrescine = S-methyl-5'-thioadenosine + spermidine + H(+). It participates in amine and polyamine biosynthesis; spermidine biosynthesis; spermidine from putrescine: step 1/1. Catalyzes the irreversible transfer of a propylamine group from the amino donor S-adenosylmethioninamine (decarboxy-AdoMet) to putrescine (1,4-diaminobutane) to yield spermidine. The chain is Polyamine aminopropyltransferase from Parasynechococcus marenigrum (strain WH8102).